A 98-amino-acid chain; its full sequence is ESAT-6-like protein EsxK (98 aa).

Belongs to the WXG100 family. CFP-10 subfamily. In terms of assembly, strongly interacts with EsxL to form a heterodimeric complex under reducing conditions. The complex is regulated by the redox state of EsxL.

Its subcellular location is the secreted. The polypeptide is ESAT-6-like protein EsxK (Mycobacterium tuberculosis (strain ATCC 25618 / H37Rv)).